The sequence spans 824 residues: Phenylalanine--tRNA ligase beta subunit (824 aa).

A tRNA-binding domain is found at 39–153; the sequence is SEQAKNVVIG…NIPPIGSNAV (115 aa). Residues 414-507 enclose the B5 domain; the sequence is KKSISVNLRM…RLIGYDNFDS (94 aa). The Mg(2+) site is built by Asp-485, Asp-491, Glu-494, and Glu-495. In terms of domain architecture, FDX-ACB spans 730–823; it reads PTVPYMERDI…LKEKIKAELR (94 aa).

This sequence belongs to the phenylalanyl-tRNA synthetase beta subunit family. Type 1 subfamily. As to quaternary structure, tetramer of two alpha and two beta subunits. Mg(2+) is required as a cofactor.

It localises to the cytoplasm. It catalyses the reaction tRNA(Phe) + L-phenylalanine + ATP = L-phenylalanyl-tRNA(Phe) + AMP + diphosphate + H(+). In Prochlorococcus marinus (strain NATL2A), this protein is Phenylalanine--tRNA ligase beta subunit.